The primary structure comprises 620 residues: MLGGGSVDGERDTDDDAAGAVAAPPAIDFPAEVSDPKYDESDVPAELQVFKEPLQQPTFPFLVANQLLLVSLLEHLSHVHEPNPLHSKQVFKLLCQTFIKMGLLSSFTCSDEFSSLRLHHNRAITHLMRSAKERVRQDPCQDNSYMQKIRSREIALEAQTSRYLNEFEELAILGKGGYGRVYKVRNKLDGQHYAIKKILIKSATKTDCMKVLREVKVLAGLQHPNIVGYHTAWIEHVHVLQPQDRVPIQLPSLEVLSEHEGDRNQGGVKDNESSSSIIFAELTPEKENPLAESDVKNENNNLVSYRANLVIRSSSESESSIELQEDGLNESPLRPVVKHQLPLGHSSDVEGNFTSTDESSEDNLNLLGQTEARYHLMLHIQMQLCELSLWDWIAERNNRSRECVDEAACPYVMASVATKIFQELVEGVFYIHNMGIVHRDLKPRNIFLHGPDQQVKIGDFGLACADIIQKSADWTNRNGKGTPTHTSRVGTCLYASPEQLEGSEYDAKSDMYSLGVILLELFQPFGTEMERATVLTGVRTGRIPESLSKRCPVQAKYIQLLTGRNAAQRPSALQLLQSELFQTTGNVNLTLQMKIMEQEKEIEELKKQLSLLSQDKGLKR.

Positions 1–38 (MLGGGSVDGERDTDDDAAGAVAAPPAIDFPAEVSDPKY) are disordered. Residues 18–28 (AGAVAAPPAID) are compositionally biased toward low complexity. The SIFI-degron motif lies at 85-104 (LHSKQVFKLLCQTFIKMGLL). Positions 167 to 581 (FEELAILGKG…ALQLLQSELF (415 aa)) constitute a Protein kinase domain. ATP-binding positions include 173-181 (LGKGGYGRV) and K196. Residue T283 is modified to Phosphothreonine. The stretch at 408–413 (ACPYVM) is one HRM 1 repeat. The active-site Proton acceptor is the D440. Phosphothreonine; by autocatalysis occurs at positions 484 and 486. Phosphothreonine is present on T491. An HRM 2 repeat occupies 550-555 (RCPVQA).

Belongs to the protein kinase superfamily. Ser/Thr protein kinase family. GCN2 subfamily. As to quaternary structure, synthesized in an inactive form that binds to the N-terminal domain of CDC37. Has to be associated with a multiprotein complex containing Hsp90, CDC37 and PPP5C for maturation and activation by autophosphorylation. The phosphatase PPP5C modulates this activation. Homodimer; homodimerizes in presence of heme, forming a disulfide-linked inactive homodimer. Interacts with DELE1; binds both to full-length DELE1 and processed form of DELE1 (S-DELE1) in response to stress, leading to activate its protein kinase activity and trigger the integrated stress response (ISR). Activated by autophosphorylation; phosphorylated predominantly on serine and threonine residues, but also on tyrosine residues. Autophosphorylation at Thr-486 is required for kinase activation. The active autophosphorylated form apparently is largely refractory to cellular heme fluctuations. Post-translationally, ubiquitinated and degraded by the SIFI complex once the mitochondrial stress has been resolved, thereby providing stress response silencing. Within the SIFI complex, UBR4 initiates ubiquitin chain that are further elongated or branched by KCMF1.

Its subcellular location is the cytoplasm. It catalyses the reaction L-seryl-[protein] + ATP = O-phospho-L-seryl-[protein] + ADP + H(+). It carries out the reaction L-threonyl-[protein] + ATP = O-phospho-L-threonyl-[protein] + ADP + H(+). Its activity is regulated as follows. In normal conditions, the protein kinase activity is inhibited; inhibition is relieved by various stress conditions. Inhibited by heme: in presence of heme, forms a disulfide-linked inactive homodimer. Heme depletion relieves inhibition and stimulates kinase activity by autophosphorylation. Inhibited by the heme metabolites biliverdin and bilirubin. Induced by oxidative stress generated by arsenite treatment. Binding of nitric oxide (NO) to the heme iron in the N-terminal heme-binding domain activates the kinase activity, while binding of carbon monoxide (CO) suppresses kinase activity. Protein kinase activity is also activated upon binding to DELE1 in response to various stress, triggering the integrated stress response (ISR): activated by full-length DELE1 in response to iron deficiency, while it is activated by the processed form of DELE1 (S-DELE1) in response to mitochondrial stress. Its function is as follows. Metabolic-stress sensing protein kinase that phosphorylates the alpha subunit of eukaryotic translation initiation factor 2 (EIF2S1/eIF-2-alpha) in response to various stress conditions. Key activator of the integrated stress response (ISR) required for adaptation to various stress, such as heme deficiency, oxidative stress, osmotic shock, mitochondrial dysfunction and heat shock. EIF2S1/eIF-2-alpha phosphorylation in response to stress converts EIF2S1/eIF-2-alpha in a global protein synthesis inhibitor, leading to a global attenuation of cap-dependent translation, while concomitantly initiating the preferential translation of ISR-specific mRNAs, such as the transcriptional activator ATF4, and hence allowing ATF4-mediated reprogramming. Acts as a key sensor of heme-deficiency: in normal conditions, binds hemin via a cysteine thiolate and histidine nitrogenous coordination, leading to inhibit the protein kinase activity. This binding occurs with moderate affinity, allowing it to sense the heme concentration within the cell: heme depletion relieves inhibition and stimulates kinase activity, activating the ISR. Thanks to this unique heme-sensing capacity, plays a crucial role to shut off protein synthesis during acute heme-deficient conditions. In red blood cells (RBCs), controls hemoglobin synthesis ensuring a coordinated regulation of the synthesis of its heme and globin moieties. It thereby plays an essential protective role for RBC survival in anemias of iron deficiency. Iron deficiency also triggers activation by full-length DELE1. Also activates the ISR in response to mitochondrial dysfunction: HRI/EIF2AK1 protein kinase activity is activated upon binding to the processed form of DELE1 (S-DELE1), thereby promoting the ATF4-mediated reprogramming. Also acts as an activator of mitophagy in response to mitochondrial damage: catalyzes phosphorylation of eIF-2-alpha (EIF2S1) following activation by S-DELE1, thereby promoting mitochondrial localization of EIF2S1, triggering PRKN-independent mitophagy. This Rattus norvegicus (Rat) protein is Eukaryotic translation initiation factor 2-alpha kinase 1.